Here is a 289-residue protein sequence, read N- to C-terminus: Purine nucleoside phosphorylase (289 aa).

M1 is subject to N-acetylmethionine. Residues S33, H64, and 84-86 contribute to the phosphate site; that span reads RFH. Y88 provides a ligand contact to a purine D-ribonucleoside. A116 is a binding site for phosphate. A purine D-ribonucleoside contacts are provided by E201 and M219. S220 lines the phosphate pocket. N243 serves as a coordination point for a purine D-ribonucleoside. S251 is subject to Phosphoserine. H257 serves as a coordination point for a purine D-ribonucleoside.

Belongs to the PNP/MTAP phosphorylase family. As to quaternary structure, homotrimer.

It localises to the cytoplasm. It carries out the reaction inosine + phosphate = alpha-D-ribose 1-phosphate + hypoxanthine. The enzyme catalyses guanosine + phosphate = alpha-D-ribose 1-phosphate + guanine. It catalyses the reaction 2'-deoxyguanosine + phosphate = 2-deoxy-alpha-D-ribose 1-phosphate + guanine. The catalysed reaction is 2'-deoxyinosine + phosphate = 2-deoxy-alpha-D-ribose 1-phosphate + hypoxanthine. Its pathway is purine metabolism; purine nucleoside salvage. Functionally, catalyzes the phosphorolytic breakdown of the N-glycosidic bond in the beta-(deoxy)ribonucleoside molecules, with the formation of the corresponding free purine bases and pentose-1-phosphate. Preferentially acts on 6-oxopurine nucleosides including inosine and guanosine. This Bos taurus (Bovine) protein is Purine nucleoside phosphorylase (PNP).